We begin with the raw amino-acid sequence, 253 residues long: Sulfur carrier protein FdhD (253 aa).

The Cysteine persulfide intermediate role is filled by Cys100.

The protein belongs to the FdhD family.

It is found in the cytoplasm. Required for formate dehydrogenase (FDH) activity. Acts as a sulfur carrier protein that transfers sulfur from IscS to the molybdenum cofactor prior to its insertion into FDH. This Sulfolobus acidocaldarius (strain ATCC 33909 / DSM 639 / JCM 8929 / NBRC 15157 / NCIMB 11770) protein is Sulfur carrier protein FdhD.